The chain runs to 426 residues: Serine--tRNA ligase (426 aa).

229–231 (TAE) is a binding site for L-serine. Residues 260–262 (RKE) and Val276 contribute to the ATP site. Residue Glu283 coordinates L-serine. Residue 349 to 352 (EVTS) coordinates ATP. Thr384 contributes to the L-serine binding site.

The protein belongs to the class-II aminoacyl-tRNA synthetase family. Type-1 seryl-tRNA synthetase subfamily. Homodimer. The tRNA molecule binds across the dimer.

The protein localises to the cytoplasm. The catalysed reaction is tRNA(Ser) + L-serine + ATP = L-seryl-tRNA(Ser) + AMP + diphosphate + H(+). It catalyses the reaction tRNA(Sec) + L-serine + ATP = L-seryl-tRNA(Sec) + AMP + diphosphate + H(+). It participates in aminoacyl-tRNA biosynthesis; selenocysteinyl-tRNA(Sec) biosynthesis; L-seryl-tRNA(Sec) from L-serine and tRNA(Sec): step 1/1. Its function is as follows. Catalyzes the attachment of serine to tRNA(Ser). Is also able to aminoacylate tRNA(Sec) with serine, to form the misacylated tRNA L-seryl-tRNA(Sec), which will be further converted into selenocysteinyl-tRNA(Sec). The protein is Serine--tRNA ligase of Treponema pallidum (strain Nichols).